The following is a 449-amino-acid chain: Exodeoxyribonuclease 7 large subunit (449 aa).

This sequence belongs to the XseA family. In terms of assembly, heterooligomer composed of large and small subunits.

Its subcellular location is the cytoplasm. It carries out the reaction Exonucleolytic cleavage in either 5'- to 3'- or 3'- to 5'-direction to yield nucleoside 5'-phosphates.. In terms of biological role, bidirectionally degrades single-stranded DNA into large acid-insoluble oligonucleotides, which are then degraded further into small acid-soluble oligonucleotides. The chain is Exodeoxyribonuclease 7 large subunit from Aliivibrio fischeri (strain MJ11) (Vibrio fischeri).